The following is a 197-amino-acid chain: Lymphotoxin-alpha (197 aa).

An N-terminal signal peptide occupies residues 1 to 26 (MTPPGRLYLPLLLGLLLAPPPPGAQG). In terms of domain architecture, THD spans 55 to 197 (PAAHLVGDPS…SSVFFGAFAL (143 aa)). N88 carries N-linked (GlcNAc...) asparagine glycosylation. The cysteines at positions 112 and 148 are disulfide-linked.

Belongs to the tumor necrosis factor family. In terms of assembly, homotrimer, and heterotrimer of either two LTB and one LTA subunits or (less prevalent) two LTA and one LTB subunits. Interacts with TNFRSF14.

It is found in the secreted. The protein localises to the membrane. Functionally, cytokine that in its homotrimeric form binds to TNFRSF1A/TNFR1, TNFRSF1B/TNFBR and TNFRSF14/HVEM. In its heterotrimeric form with LTB binds to TNFRSF3/LTBR. Lymphotoxin is produced by lymphocytes and is cytotoxic for a wide range of tumor cells in vitro and in vivo. The polypeptide is Lymphotoxin-alpha (LTA) (Oryctolagus cuniculus (Rabbit)).